A 428-amino-acid chain; its full sequence is MLKSVIENVHALEIFDSRGNPTVEVHVTLSNGVVGKAEVPSGASTGENEAVELRDGGSRLGGKGVSKAVNNVNTEINDALKGMDPFDQPKIDQTMIDLDGTPNKGRLGANAILGVSMATAVAAANANRQPLYRYLGGIDLEMPQTFHNVINGGEHADNGIDIQEFMITPIAKTSFRDGFEKIVNVYHTLKKVLEDMGYETGLGDEGGFAPNMKNSEEALKALHESIIKAGYKPGEDIGIACDCAASYFYNKEDGKYHLEGKVLTDDELAAYYDKLLDEFPELMSMEDPYDENDVEGMVKFTATHKDRIQIVLDDFICTNPALLKKAIKEGAGNASLIKLNQIGTVTETLETIRMSRKNGYNTMISHRSGETGDTFIADLAVAINGGQLKTGAPARSERVEKYNRLLEIEEELGKGERLAFFPDDVDHD.

Glutamine 163 lines the (2R)-2-phosphoglycerate pocket. The Proton donor role is filled by glutamate 205. Residues aspartate 242, glutamate 286, and aspartate 313 each contribute to the Mg(2+) site. The (2R)-2-phosphoglycerate site is built by lysine 338, arginine 367, serine 368, and lysine 389. The Proton acceptor role is filled by lysine 338.

The protein belongs to the enolase family. Requires Mg(2+) as cofactor.

The protein localises to the cytoplasm. It is found in the secreted. It localises to the cell surface. The enzyme catalyses (2R)-2-phosphoglycerate = phosphoenolpyruvate + H2O. It participates in carbohydrate degradation; glycolysis; pyruvate from D-glyceraldehyde 3-phosphate: step 4/5. Catalyzes the reversible conversion of 2-phosphoglycerate (2-PG) into phosphoenolpyruvate (PEP). It is essential for the degradation of carbohydrates via glycolysis. The polypeptide is Enolase (Lactobacillus acidophilus (strain ATCC 700396 / NCK56 / N2 / NCFM)).